A 786-amino-acid chain; its full sequence is DNA repair and recombination protein RAD54-like (786 aa).

The interval 2 to 9 (RRSLAPSQ) is required for chromatin remodeling, strand pairing activities and coupling of ATPase activity. Position 22 is a phosphothreonine (Thr-22). Residues 165–340 (EGKRGNFNGC…FSLVNFVNPE (176 aa)) form the Helicase ATP-binding domain. An ATP-binding site is contributed by 178-185 (DEMGLGKT). The DEGH box signature appears at 291-294 (DEGH). In terms of domain architecture, Helicase C-terminal spans 497–654 (LLDFMLAAIR…NNDSAEKHFT (158 aa)). Residues 740–786 (KQPTCITEDNHSEQPQLNSKRNANSVLENDDDEDFDPNSSDEKFLGF) are disordered. Polar residues predominate over residues 752–766 (EQPQLNSKRNANSVL).

This sequence belongs to the SNF2/RAD54 helicase family. In terms of assembly, interacts (via N-terminus) with spn-A/Rad51.

It is found in the nucleus. Its function is as follows. Involved in mitotic DNA repair and meiotic recombination. Functions in the recombinational DNA repair pathway. Essential for interhomolog gene conversion (GC), but may have a less important role in intersister GC than spn-A/Rad51. In the presence of DNA, spn-A/Rad51 enhances the ATPase activity of okr/Rad54. The protein is DNA repair and recombination protein RAD54-like of Drosophila virilis (Fruit fly).